Reading from the N-terminus, the 260-residue chain is Ribosomal RNA small subunit methyltransferase A (260 aa).

S-adenosyl-L-methionine contacts are provided by Asn-16, Leu-18, Gly-43, Glu-64, Asp-86, and Asn-108.

This sequence belongs to the class I-like SAM-binding methyltransferase superfamily. rRNA adenine N(6)-methyltransferase family. RsmA subfamily.

It is found in the cytoplasm. It carries out the reaction adenosine(1518)/adenosine(1519) in 16S rRNA + 4 S-adenosyl-L-methionine = N(6)-dimethyladenosine(1518)/N(6)-dimethyladenosine(1519) in 16S rRNA + 4 S-adenosyl-L-homocysteine + 4 H(+). Specifically dimethylates two adjacent adenosines (A1518 and A1519) in the loop of a conserved hairpin near the 3'-end of 16S rRNA in the 30S particle. May play a critical role in biogenesis of 30S subunits. This chain is Ribosomal RNA small subunit methyltransferase A, found in Buchnera aphidicola subsp. Baizongia pistaciae (strain Bp).